Reading from the N-terminus, the 376-residue chain is Queuine tRNA-ribosyltransferase (376 aa).

Aspartate 92 acts as the Proton acceptor in catalysis. Substrate contacts are provided by residues 92 to 96, aspartate 146, glutamine 190, and glycine 217; that span reads DSGGF. An RNA binding region spans residues 248–254; it reads GVGRPED. Aspartate 267 serves as the catalytic Nucleophile. The segment at 272 to 276 is RNA binding; important for wobble base 34 recognition; it reads TRNAR. Zn(2+)-binding residues include cysteine 305, cysteine 307, cysteine 310, and histidine 337.

The protein belongs to the queuine tRNA-ribosyltransferase family. In terms of assembly, homodimer. Within each dimer, one monomer is responsible for RNA recognition and catalysis, while the other monomer binds to the replacement base PreQ1. The cofactor is Zn(2+).

It carries out the reaction 7-aminomethyl-7-carbaguanine + guanosine(34) in tRNA = 7-aminomethyl-7-carbaguanosine(34) in tRNA + guanine. The protein operates within tRNA modification; tRNA-queuosine biosynthesis. In terms of biological role, catalyzes the base-exchange of a guanine (G) residue with the queuine precursor 7-aminomethyl-7-deazaguanine (PreQ1) at position 34 (anticodon wobble position) in tRNAs with GU(N) anticodons (tRNA-Asp, -Asn, -His and -Tyr). Catalysis occurs through a double-displacement mechanism. The nucleophile active site attacks the C1' of nucleotide 34 to detach the guanine base from the RNA, forming a covalent enzyme-RNA intermediate. The proton acceptor active site deprotonates the incoming PreQ1, allowing a nucleophilic attack on the C1' of the ribose to form the product. After dissociation, two additional enzymatic reactions on the tRNA convert PreQ1 to queuine (Q), resulting in the hypermodified nucleoside queuosine (7-(((4,5-cis-dihydroxy-2-cyclopenten-1-yl)amino)methyl)-7-deazaguanosine). In Stenotrophomonas maltophilia (strain R551-3), this protein is Queuine tRNA-ribosyltransferase.